A 97-amino-acid polypeptide reads, in one-letter code: Co-chaperonin GroES (97 aa).

Belongs to the GroES chaperonin family. As to quaternary structure, heptamer of 7 subunits arranged in a ring. Interacts with the chaperonin GroEL.

The protein resides in the cytoplasm. Together with the chaperonin GroEL, plays an essential role in assisting protein folding. The GroEL-GroES system forms a nano-cage that allows encapsulation of the non-native substrate proteins and provides a physical environment optimized to promote and accelerate protein folding. GroES binds to the apical surface of the GroEL ring, thereby capping the opening of the GroEL channel. The polypeptide is Co-chaperonin GroES (Ectopseudomonas mendocina (strain ymp) (Pseudomonas mendocina)).